The following is a 331-amino-acid chain: Beta-ketoacyl-[acyl-carrier-protein] synthase III (331 aa).

Catalysis depends on residues Cys-113 and His-253. Positions 254-258 (QANTR) are ACP-binding. The active site involves Asn-283.

It belongs to the thiolase-like superfamily. FabH family. In terms of assembly, homodimer.

It localises to the cytoplasm. It catalyses the reaction malonyl-[ACP] + acetyl-CoA + H(+) = 3-oxobutanoyl-[ACP] + CO2 + CoA. The protein operates within lipid metabolism; fatty acid biosynthesis. In terms of biological role, catalyzes the condensation reaction of fatty acid synthesis by the addition to an acyl acceptor of two carbons from malonyl-ACP. Catalyzes the first condensation reaction which initiates fatty acid synthesis and may therefore play a role in governing the total rate of fatty acid production. Possesses both acetoacetyl-ACP synthase and acetyl transacylase activities. Its substrate specificity determines the biosynthesis of branched-chain and/or straight-chain of fatty acids. This is Beta-ketoacyl-[acyl-carrier-protein] synthase III from Desulfitobacterium hafniense (strain DSM 10664 / DCB-2).